A 337-amino-acid polypeptide reads, in one-letter code: Holliday junction branch migration complex subunit RuvB (337 aa).

Positions Gln-4–Tyr-184 are large ATPase domain (RuvB-L). Residues Ile-23, Arg-24, Gly-65, Lys-68, Thr-69, Thr-70, Glu-131 to Tyr-133, Arg-174, Tyr-184, and Arg-221 each bind ATP. Thr-69 contributes to the Mg(2+) binding site. The segment at Asp-185–Ser-255 is small ATPAse domain (RuvB-S). The head domain (RuvB-H) stretch occupies residues Ser-258–Lys-337. Residues Arg-313 and Arg-318 each contribute to the DNA site.

Belongs to the RuvB family. In terms of assembly, homohexamer. Forms an RuvA(8)-RuvB(12)-Holliday junction (HJ) complex. HJ DNA is sandwiched between 2 RuvA tetramers; dsDNA enters through RuvA and exits via RuvB. An RuvB hexamer assembles on each DNA strand where it exits the tetramer. Each RuvB hexamer is contacted by two RuvA subunits (via domain III) on 2 adjacent RuvB subunits; this complex drives branch migration. In the full resolvosome a probable DNA-RuvA(4)-RuvB(12)-RuvC(2) complex forms which resolves the HJ.

The protein localises to the cytoplasm. It catalyses the reaction ATP + H2O = ADP + phosphate + H(+). Functionally, the RuvA-RuvB-RuvC complex processes Holliday junction (HJ) DNA during genetic recombination and DNA repair, while the RuvA-RuvB complex plays an important role in the rescue of blocked DNA replication forks via replication fork reversal (RFR). RuvA specifically binds to HJ cruciform DNA, conferring on it an open structure. The RuvB hexamer acts as an ATP-dependent pump, pulling dsDNA into and through the RuvAB complex. RuvB forms 2 homohexamers on either side of HJ DNA bound by 1 or 2 RuvA tetramers; 4 subunits per hexamer contact DNA at a time. Coordinated motions by a converter formed by DNA-disengaged RuvB subunits stimulates ATP hydrolysis and nucleotide exchange. Immobilization of the converter enables RuvB to convert the ATP-contained energy into a lever motion, pulling 2 nucleotides of DNA out of the RuvA tetramer per ATP hydrolyzed, thus driving DNA branch migration. The RuvB motors rotate together with the DNA substrate, which together with the progressing nucleotide cycle form the mechanistic basis for DNA recombination by continuous HJ branch migration. Branch migration allows RuvC to scan DNA until it finds its consensus sequence, where it cleaves and resolves cruciform DNA. The polypeptide is Holliday junction branch migration complex subunit RuvB (Marinomonas sp. (strain MWYL1)).